The following is a 408-amino-acid chain: MNITKMKLFYVILFFISSLQISNSIDFNYPSAFNFGDSNSDTGDLVAGLGIRLDLPNGQNSFKTSSQRFCDGRLVIDFLMDEMDLPFLNPYLDSLGLPNFKKGCNFAAAGSTILPANPTSVSPFSFDLQISQFIRFKSRAIELLSKTGRKYEKYLPPIDYYSKGLYMIDIGQNDIAGAFYSKTLDQVLASIPSILETFEAGLKRLYEEGGRNIWIHNTGPLGCLAQNIAKFGTDSTKLDEFGCVSSHNQAAKLFNLQLHAMSNKFQAQYPDANVTYVDIFSIKSNLIANYSRFGKHFTKPLIDLNHLENVGYNKILNVLGFEKPLMACCGVGGAPLNYDSRITCGQTKVLDGISVTAKACNDSSEYINWDGIHYTEAANEFVSSQILTGKYSDPPFSDQMPFFLTLKF.

Positions 1–24 (MNITKMKLFYVILFFISSLQISNS) are cleaved as a signal peptide. Residue Ser38 is the Nucleophile of the active site. N-linked (GlcNAc...) asparagine glycosylation is found at Asn273, Asn289, and Asn361. Catalysis depends on residues Asp370 and His373.

The protein belongs to the 'GDSL' lipolytic enzyme family.

It is found in the secreted. This chain is GDSL esterase/lipase At1g54790, found in Arabidopsis thaliana (Mouse-ear cress).